Consider the following 910-residue polypeptide: Triacylglycerol lipase 4 (910 aa).

A compositionally biased stretch (basic and acidic residues) spans 51-66 (SKDNSDVERVEEDAGK). A disordered region spans residues 51–120 (SKDNSDVERV…TDEGEDERQG (70 aa)). A Phosphoserine modification is found at Ser55. The segment covering 70–85 (TGKNKTTNKVNFNLDT) has biased composition (polar residues). A compositionally biased stretch (acidic residues) spans 90-116 (KLDDDQETVTENENNDIEMVETDEGED). Residues 282-483 (LVLSGGGTFG…DNDLPISRLS (202 aa)) form the PNPLA domain. The GXGXXG motif lies at 286–291 (GGGTFG). A GXSXG motif is present at residues 313–317 (GSSAG). Ser315 serves as the catalytic Nucleophile. The Proton acceptor role is filled by Asp470. Disordered regions lie at residues 657–683 (EQTS…DNHI) and 713–777 (SPSG…PILQ). Residues 666–683 (PENSTLLTRTPTKGDNHI) are compositionally biased toward polar residues. Phosphothreonine; by Cdk1 is present on Thr675. Ser737, Ser749, Ser751, and Ser836 each carry phosphoserine. The segment covering 739–768 (TISTSRRPAKSFSFSVASPTSRMLRQSSKI) has biased composition (polar residues). Positions 874–910 (RRHSIDGRPPSQATKSSPFRSRPSSSTQHKSTTSFTQ) are disordered. The segment covering 889–899 (SSPFRSRPSSS) has biased composition (low complexity). The residue at position 890 (Ser890) is a Phosphoserine; by Cdk1. A compositionally biased stretch (polar residues) spans 900 to 910 (TQHKSTTSFTQ).

Phosphorylation at Thr-675 and Ser-890 by Cdk1/CDC28 stimulates enzyme activity in vivo.

The protein resides in the lipid droplet. The catalysed reaction is a triacylglycerol + H2O = a diacylglycerol + a fatty acid + H(+). It carries out the reaction 1,2,3-tri-(9Z-octadecenoyl)-glycerol + H2O = di-(9Z)-octadecenoylglycerol + (9Z)-octadecenoate + H(+). It catalyses the reaction 1,2-dihexadecanoyl-sn-glycero-3-phosphocholine + H2O = 1-hexadecanoyl-sn-glycero-3-phosphocholine + hexadecanoate + H(+). The enzyme catalyses cholesteryl (9Z-octadecenoate) + H2O = cholesterol + (9Z)-octadecenoate + H(+). The catalysed reaction is 1-(9Z-octadecenoyl)-sn-glycero-3-phosphate + (9Z)-octadecenoyl-CoA = 1,2-di-(9Z-octadecenoyl)-sn-glycero-3-phosphate + CoA. Phosphorylated and activated by cyclin-dependent kinase 1 (Cdk1/CDC28). Loses its lipolytic activity in cells lacking nonpolar lipids, but retains its side activity as lysophospholipid acyltransferase. Lipid particle-localized triacylglycerol (TAG) lipase. The lipid droplet/particle is a lipid storage compartment which serves as a depot of energy and building blocks for membrane lipid biosynthesis. Involved in the mobilization of the non-polar storage lipids triacylglycerols (TAGs) from lipid particles by hydrolysis of TAGs, releasing and supplying specific fatty acids to the appropriate metabolic pathways. Also has steryl ester (SE) hydrolase and phospholipase A(2) (PLA(2)) activities, and catalyzes the acylation of lysophosphatidic acid (LPA). Contributes to early bud formation in late G1 phase of the cell cycle upon phosphorylation and activation by cyclin-dependent kinase 1 (Cdk1/CDC28). The protein is Triacylglycerol lipase 4 (TGL4) of Saccharomyces cerevisiae (strain ATCC 204508 / S288c) (Baker's yeast).